Consider the following 2292-residue polypeptide: Protein Ycf2 (2292 aa).

1640–1647 (GSIGIGRS) serves as a coordination point for ATP.

The protein belongs to the Ycf2 family.

Its subcellular location is the plastid. The protein localises to the chloroplast stroma. Functionally, probable ATPase of unknown function. Its presence in a non-photosynthetic plant (Epifagus virginiana) and experiments in tobacco indicate that it has an essential function which is probably not related to photosynthesis. The protein is Protein Ycf2 of Liriodendron tulipifera (Tuliptree).